A 133-amino-acid chain; its full sequence is Capsid protein (133 aa).

Belongs to the Leviviricetes capsid protein family. In terms of assembly, homodimer. The capsid protein dimer binds to the viral RNA via an operator hairpin, but also many other RNA sequences in the viral genome.

The protein localises to the virion. In terms of biological role, capsid protein self-assembles to form an icosahedral capsid with a T=3 symmetry, about 26 nm in diameter, and consisting of 89 capsid proteins dimers (178 capsid proteins). Involved in viral genome encapsidation through the interaction between a capsid protein dimer and the multiple packaging signals present in the RNA genome. Binding of the capsid proteins to the viral RNA induces a conformational change required for efficient T=3 shell formation. The capsid also contains 1 copy of the A2 maturation protein. Functionally, acts as a translational repressor of viral replicase synthesis late in infection. This latter function is the result of capsid protein interaction with an RNA hairpin which contains the replicase ribosome-binding site. This chain is Capsid protein, found in Escherichia coli.